Here is a 579-residue protein sequence, read N- to C-terminus: V-type ATP synthase alpha chain (579 aa).

227–234 (GGFGTGKT) lines the ATP pocket.

The protein belongs to the ATPase alpha/beta chains family.

It carries out the reaction ATP + H2O + 4 H(+)(in) = ADP + phosphate + 5 H(+)(out). Produces ATP from ADP in the presence of a proton gradient across the membrane. The V-type alpha chain is a catalytic subunit. The chain is V-type ATP synthase alpha chain from Anaeromyxobacter dehalogenans (strain 2CP-1 / ATCC BAA-258).